The sequence spans 330 residues: Fructose-1,6-bisphosphatase class 1 (330 aa).

Mg(2+)-binding residues include Glu-84, Asp-103, Leu-105, and Asp-106. Substrate is bound by residues 106-109 (DGSS), Asn-196, and Lys-262. Residue Glu-268 participates in Mg(2+) binding.

This sequence belongs to the FBPase class 1 family. As to quaternary structure, homotetramer. The cofactor is Mg(2+).

The protein localises to the cytoplasm. The enzyme catalyses beta-D-fructose 1,6-bisphosphate + H2O = beta-D-fructose 6-phosphate + phosphate. Its pathway is carbohydrate biosynthesis; gluconeogenesis. The protein is Fructose-1,6-bisphosphatase class 1 of Shewanella sp. (strain MR-7).